We begin with the raw amino-acid sequence, 361 residues long: Ribosomal RNA large subunit methyltransferase M (361 aa).

Residues serine 187, cysteine 220–glycine 223, aspartate 239, aspartate 259, and aspartate 276 contribute to the S-adenosyl-L-methionine site. Lysine 305 (proton acceptor) is an active-site residue.

This sequence belongs to the class I-like SAM-binding methyltransferase superfamily. RNA methyltransferase RlmE family. RlmM subfamily. In terms of assembly, monomer.

It is found in the cytoplasm. It catalyses the reaction cytidine(2498) in 23S rRNA + S-adenosyl-L-methionine = 2'-O-methylcytidine(2498) in 23S rRNA + S-adenosyl-L-homocysteine + H(+). In terms of biological role, catalyzes the 2'-O-methylation at nucleotide C2498 in 23S rRNA. This Shewanella putrefaciens (strain CN-32 / ATCC BAA-453) protein is Ribosomal RNA large subunit methyltransferase M.